The sequence spans 497 residues: Acetyl-coenzyme A carboxylase carboxyl transferase subunit beta, chloroplastic (497 aa).

Residues 225–497 form the CoA carboxyltransferase N-terminal domain; sequence LWVQCENCYG…LHGFLPLNQD (273 aa). Residues Cys-229, Cys-232, Cys-248, and Cys-251 each contribute to the Zn(2+) site. The C4-type zinc finger occupies 229-251; the sequence is CENCYGLNYKKFFSSKMNICEYC.

Belongs to the AccD/PCCB family. Acetyl-CoA carboxylase is a heterohexamer composed of biotin carboxyl carrier protein, biotin carboxylase and 2 subunits each of ACCase subunit alpha and ACCase plastid-coded subunit beta (accD). Requires Zn(2+) as cofactor.

It is found in the plastid. It localises to the chloroplast stroma. It catalyses the reaction N(6)-carboxybiotinyl-L-lysyl-[protein] + acetyl-CoA = N(6)-biotinyl-L-lysyl-[protein] + malonyl-CoA. It participates in lipid metabolism; malonyl-CoA biosynthesis; malonyl-CoA from acetyl-CoA: step 1/1. Its function is as follows. Component of the acetyl coenzyme A carboxylase (ACC) complex. Biotin carboxylase (BC) catalyzes the carboxylation of biotin on its carrier protein (BCCP) and then the CO(2) group is transferred by the transcarboxylase to acetyl-CoA to form malonyl-CoA. The chain is Acetyl-coenzyme A carboxylase carboxyl transferase subunit beta, chloroplastic from Phalaenopsis aphrodite subsp. formosana (Moth orchid).